Consider the following 256-residue polypeptide: Nickel import ATP-binding protein NikD (256 aa).

Positions Leu6–Leu245 constitute an ABC transporter domain. Gly38–Ser45 is an ATP binding site.

The protein belongs to the ABC transporter superfamily. Nickel importer (TC 3.A.1.5.3) family. The complex is composed of two ATP-binding proteins (NikD and NikE), two transmembrane proteins (NikB and NikC) and a solute-binding protein (NikA).

The protein localises to the cell inner membrane. It carries out the reaction Ni(2+)(out) + ATP + H2O = Ni(2+)(in) + ADP + phosphate + H(+). Functionally, part of the ABC transporter complex NikABCDE involved in nickel import. Responsible for energy coupling to the transport system. This Pseudomonas putida (strain ATCC 47054 / DSM 6125 / CFBP 8728 / NCIMB 11950 / KT2440) protein is Nickel import ATP-binding protein NikD.